Reading from the N-terminus, the 465-residue chain is ATP-dependent RNA helicase ddx19 (465 aa).

The span at 1–20 shows a compositional bias: basic and acidic residues; that stretch reads MSEKETNTTSTENKEKEKQE. Residues 1-45 form a disordered region; sequence MSEKETNTTSTENKEKEKQEQTNTNSTTESTNNQVDEEYERPGRS. Over residues 21 to 34 the composition is skewed to low complexity; that stretch reads QTNTNSTTESTNNQ. The Q motif motif lies at 70 to 98; that stretch reads KTFEELGLKPELLKGVYAMGYNKPSKIQE. The 167-residue stretch at 102–268 folds into the Helicase ATP-binding domain; it reads PIIIQSPNNL…KKIVQDPYTS (167 aa). 115 to 122 provides a ligand contact to ATP; it reads SQSGTGKT. Residues 215–218 carry the DEAD box motif; the sequence is DEAD. The Helicase C-terminal domain maps to 297–449; that stretch reads ILSDIYGFIS…ELKSSEIESL (153 aa).

It belongs to the DEAD box helicase family. DDX19/DBP5 subfamily.

The catalysed reaction is ATP + H2O = ADP + phosphate + H(+). Its function is as follows. ATP-binding RNA helicase required for normal differentiation and development. The sequence is that of ATP-dependent RNA helicase ddx19 (helC) from Dictyostelium discoideum (Social amoeba).